Consider the following 360-residue polypeptide: GTPase Obg (360 aa).

Residues 1 to 156 (MFVDSVEIII…KCVRLELKLI (156 aa)) form the Obg domain. Residues 157-360 (ADIGLVGFPN…LKFVLLEALP (204 aa)) enclose the OBG-type G domain. GTP is bound by residues 163–170 (GFPNAGKS), 188–192 (FTTLV), 210–213 (DIPG), 279–282 (NKCD), and 341–343 (SAV). The Mg(2+) site is built by S170 and T190.

Belongs to the TRAFAC class OBG-HflX-like GTPase superfamily. OBG GTPase family. As to quaternary structure, monomer. Requires Mg(2+) as cofactor.

The protein resides in the cytoplasm. An essential GTPase which binds GTP, GDP and possibly (p)ppGpp with moderate affinity, with high nucleotide exchange rates and a fairly low GTP hydrolysis rate. Plays a role in control of the cell cycle, stress response, ribosome biogenesis and in those bacteria that undergo differentiation, in morphogenesis control. The protein is GTPase Obg of Helicobacter acinonychis (strain Sheeba).